The sequence spans 182 residues: Ribosome maturation factor RimM (182 aa).

One can recognise a PRC barrel domain in the interval 103–182 (EGDYYWKDLM…TIEVDWDPGF (80 aa)).

The protein belongs to the RimM family. As to quaternary structure, binds ribosomal protein uS19.

It is found in the cytoplasm. In terms of biological role, an accessory protein needed during the final step in the assembly of 30S ribosomal subunit, possibly for assembly of the head region. Essential for efficient processing of 16S rRNA. May be needed both before and after RbfA during the maturation of 16S rRNA. It has affinity for free ribosomal 30S subunits but not for 70S ribosomes. The sequence is that of Ribosome maturation factor RimM from Klebsiella pneumoniae subsp. pneumoniae (strain ATCC 700721 / MGH 78578).